Consider the following 377-residue polypeptide: Erythronate-4-phosphate dehydrogenase (377 aa).

Residues Ser-45 and Thr-67 each contribute to the substrate site. Residues 127–128 (QV), Asp-147, and Thr-176 contribute to the NAD(+) site. Residue Arg-209 is part of the active site. Position 233 (Asp-233) interacts with NAD(+). Glu-238 is an active-site residue. Residue His-255 is the Proton donor of the active site. Gly-258 lines the NAD(+) pocket. Residue Tyr-259 participates in substrate binding.

It belongs to the D-isomer specific 2-hydroxyacid dehydrogenase family. PdxB subfamily. Homodimer.

It localises to the cytoplasm. The catalysed reaction is 4-phospho-D-erythronate + NAD(+) = (R)-3-hydroxy-2-oxo-4-phosphooxybutanoate + NADH + H(+). It participates in cofactor biosynthesis; pyridoxine 5'-phosphate biosynthesis; pyridoxine 5'-phosphate from D-erythrose 4-phosphate: step 2/5. Functionally, catalyzes the oxidation of erythronate-4-phosphate to 3-hydroxy-2-oxo-4-phosphonooxybutanoate. The chain is Erythronate-4-phosphate dehydrogenase from Vibrio vulnificus (strain YJ016).